Here is a 316-residue protein sequence, read N- to C-terminus: Large ribosomal subunit protein uL4 (316 aa).

The tract at residues 1–211 is large ribosomal subunit protein uL4; the sequence is MASCVVKNWQ…EQLKARWGSD (211 aa). 2 disordered regions span residues 44–76 and 231–316; these read ARQGNAHTKTRAEVRGGGRKPWKQKGTGRARAG and EDQA…ESDD. Positions 60-71 are enriched in basic residues; it reads GGRKPWKQKGTG. The tract at residues 212-316 is unknown; that stretch reads AAPAVLETPS…TAPAEEESDD (105 aa). Residues 255–270 are compositionally biased toward low complexity; the sequence is QTPAQPEAQENQAALQ. Acidic residues-rich tracts occupy residues 281–291 and 301–316; these read EQTEEPQDPAE and TVEEAETAPAEEESDD.

This sequence belongs to the universal ribosomal protein uL4 family. As to quaternary structure, part of the 50S ribosomal subunit.

In terms of biological role, one of the primary rRNA binding proteins, this protein initially binds near the 5'-end of the 23S rRNA. It is important during the early stages of 50S assembly. It makes multiple contacts with different domains of the 23S rRNA in the assembled 50S subunit and ribosome. Functionally, forms part of the polypeptide exit tunnel. This chain is Large ribosomal subunit protein uL4, found in Synechococcus sp. (strain JA-2-3B'a(2-13)) (Cyanobacteria bacterium Yellowstone B-Prime).